Here is a 266-residue protein sequence, read N- to C-terminus: 4-hydroxy-tetrahydrodipicolinate reductase (266 aa).

NAD(+) contacts are provided by residues 7-12, Glu33, 96-98, and 120-123; these read GTIGRM, GTT, and APNM. His153 acts as the Proton donor/acceptor in catalysis. Residue His154 participates in (S)-2,3,4,5-tetrahydrodipicolinate binding. Catalysis depends on Lys157, which acts as the Proton donor. Residue 163-164 participates in (S)-2,3,4,5-tetrahydrodipicolinate binding; it reads GT.

It belongs to the DapB family.

The protein localises to the cytoplasm. It carries out the reaction (S)-2,3,4,5-tetrahydrodipicolinate + NAD(+) + H2O = (2S,4S)-4-hydroxy-2,3,4,5-tetrahydrodipicolinate + NADH + H(+). The catalysed reaction is (S)-2,3,4,5-tetrahydrodipicolinate + NADP(+) + H2O = (2S,4S)-4-hydroxy-2,3,4,5-tetrahydrodipicolinate + NADPH + H(+). Its pathway is amino-acid biosynthesis; L-lysine biosynthesis via DAP pathway; (S)-tetrahydrodipicolinate from L-aspartate: step 4/4. Functionally, catalyzes the conversion of 4-hydroxy-tetrahydrodipicolinate (HTPA) to tetrahydrodipicolinate. In Polynucleobacter necessarius subsp. necessarius (strain STIR1), this protein is 4-hydroxy-tetrahydrodipicolinate reductase.